A 61-amino-acid polypeptide reads, in one-letter code: MAKKSWIVRAQRPPKFSVRAYNRCKICGRSRAYIRKFGMCRICFREHALKGLIPGVVKSSW.

Cys-24, Cys-27, Cys-40, and Cys-43 together coordinate Zn(2+).

This sequence belongs to the universal ribosomal protein uS14 family. Zinc-binding uS14 subfamily. Part of the 30S ribosomal subunit. Contacts proteins S3 and S10. Requires Zn(2+) as cofactor.

In terms of biological role, binds 16S rRNA, required for the assembly of 30S particles and may also be responsible for determining the conformation of the 16S rRNA at the A site. This is Small ribosomal subunit protein uS14 from Chloroflexus aurantiacus (strain ATCC 29364 / DSM 637 / Y-400-fl).